Reading from the N-terminus, the 429-residue chain is Glutamate-1-semialdehyde 2,1-aminomutase 1 (429 aa).

K268 carries the N6-(pyridoxal phosphate)lysine modification.

This sequence belongs to the class-III pyridoxal-phosphate-dependent aminotransferase family. HemL subfamily. As to quaternary structure, homodimer. The cofactor is pyridoxal 5'-phosphate.

The protein localises to the cytoplasm. It carries out the reaction (S)-4-amino-5-oxopentanoate = 5-aminolevulinate. It participates in porphyrin-containing compound metabolism; protoporphyrin-IX biosynthesis; 5-aminolevulinate from L-glutamyl-tRNA(Glu): step 2/2. This is Glutamate-1-semialdehyde 2,1-aminomutase 1 from Listeria innocua serovar 6a (strain ATCC BAA-680 / CLIP 11262).